The primary structure comprises 96 residues: Prokineticin Bm8-a (96 aa).

The first 19 residues, 1–19 (MKCFAQIVVLLLVIAFSHG), serve as a signal peptide directing secretion. Disulfide bonds link Cys-26-Cys-38, Cys-32-Cys-50, Cys-37-Cys-78, Cys-60-Cys-86, and Cys-80-Cys-95.

Belongs to the AVIT (prokineticin) family. In terms of tissue distribution, expressed by the skin glands.

The protein localises to the secreted. Its function is as follows. Potent agonist for both PKR1/PROKR1 and PKR2/PROKR2, and inducer of a potent and long-lasting hyperalgesia. Also potentiates capsaicin-induced TRPV1 current, when tested on DRG neurons. At subnanomolar concentrations, this protein both induces potent chemotaxis of macrophages and stimulates LPS-induced production of the pro-inflammatory cytokines IL-1 and IL-12. In vivo, potently stimulates the contraction of the guinea-pig gastrointestinal (GI) smooth muscle (nanomolar concentration). This chain is Prokineticin Bm8-a, found in Bombina maxima (Giant fire-bellied toad).